Consider the following 354-residue polypeptide: Sulfate permease CysP (354 aa).

The next 8 helical transmembrane spans lie at 3-23 (LAAILFSLFFAMNIGASGAAA), 40-60 (ALILCAVGVFAGAVIGGGEVV), 77-97 (IVCIIIGAAALSLFTANLLGI), 125-145 (LIIVSFWVFVPLFAFGFTYFV), 164-184 (ILGIVLLVAGFFEAFSAGMNN), 197-217 (VLDVGKGTLYGGAFVALGALL), 293-313 (VWIVSPFLSLSISYLLVSLFL), and 320-340 (IFIMVSVLLAAGGAISLTKAI).

It belongs to the inorganic phosphate transporter (PiT) (TC 2.A.20) family.

The protein resides in the cell membrane. Its function is as follows. Involved in the import of sulfate. The protein is Sulfate permease CysP (cysP) of Bacillus subtilis (strain 168).